A 323-amino-acid polypeptide reads, in one-letter code: CYFIP-related Rac1 interactor A (323 aa).

It belongs to the CYRI family.

The protein localises to the membrane. In terms of biological role, may negatively regulate RAC1 signaling and RAC1-driven cytoskeletal remodeling. May regulate chemotaxis, cell migration and epithelial polarization by controlling the polarity, plasticity, duration and extent of protrusions. This Gallus gallus (Chicken) protein is CYFIP-related Rac1 interactor A (CYRIA).